A 635-amino-acid chain; its full sequence is Threonine--tRNA ligase (635 aa).

Residues 1-62 enclose the TGS domain; it reads MITITLPDGS…EHDAILRIIT (62 aa). Residues 244–535 are catalytic; the sequence is DHRKIGKAQD…LIEHYAGIWP (292 aa). The Zn(2+) site is built by C335, H386, and H512.

Belongs to the class-II aminoacyl-tRNA synthetase family. As to quaternary structure, homodimer. It depends on Zn(2+) as a cofactor.

The protein resides in the cytoplasm. The enzyme catalyses tRNA(Thr) + L-threonine + ATP = L-threonyl-tRNA(Thr) + AMP + diphosphate + H(+). Functionally, catalyzes the attachment of threonine to tRNA(Thr) in a two-step reaction: L-threonine is first activated by ATP to form Thr-AMP and then transferred to the acceptor end of tRNA(Thr). Also edits incorrectly charged L-seryl-tRNA(Thr). This Xylella fastidiosa (strain M23) protein is Threonine--tRNA ligase.